The following is a 433-amino-acid chain: Serine/threonine-protein kinase Sgk1 (433 aa).

The disordered stretch occupies residues 66–92 (QDVELMNSNPSPPPSPSQQINLGPSSN). A compositionally biased stretch (polar residues) spans 83 to 92 (QQINLGPSSN). The region spanning 100 to 357 (FDFLKVIGKG…FTEIKNHMFF (258 aa)) is the Protein kinase domain. Residues 106–114 (IGKGSFGKV) and Lys-129 each bind ATP. Residue Asp-224 is the Proton acceptor of the active site. One can recognise an AGC-kinase C-terminal domain in the interval 358 to 433 (SPINWDDLNA…SYAPAMDSYL (76 aa)).

It belongs to the protein kinase superfamily. AGC Ser/Thr protein kinase family.

It localises to the cytoplasm. It is found in the nucleus. Its subcellular location is the endoplasmic reticulum. It carries out the reaction L-seryl-[protein] + ATP = O-phospho-L-seryl-[protein] + ADP + H(+). The catalysed reaction is L-threonyl-[protein] + ATP = O-phospho-L-threonyl-[protein] + ADP + H(+). Functionally, protein kinase that may play an important role in cellular stress response. May be involved in the regulation of processes such as cell survival, neuronal excitability and renal sodium excretion. This chain is Serine/threonine-protein kinase Sgk1 (sgk1), found in Danio rerio (Zebrafish).